The primary structure comprises 483 residues: Cobyric acid synthase (483 aa).

The GATase cobBQ-type domain maps to 251 to 438 (ALIVAVPMLP…LHGIFSADRF (188 aa)). Residue Cys-333 is the Nucleophile of the active site. His-430 is an active-site residue.

It belongs to the CobB/CobQ family. CobQ subfamily.

It participates in cofactor biosynthesis; adenosylcobalamin biosynthesis. Its function is as follows. Catalyzes amidations at positions B, D, E, and G on adenosylcobyrinic A,C-diamide. NH(2) groups are provided by glutamine, and one molecule of ATP is hydrogenolyzed for each amidation. This is Cobyric acid synthase from Brucella abortus (strain S19).